A 336-amino-acid polypeptide reads, in one-letter code: Galactose/methyl galactoside import permease protein MglC (336 aa).

Helical transmembrane passes span G17–L37, I53–G73, L107–I127, A128–I148, F181–W201, V227–L247, T257–V277, F279–I299, and I306–A326.

It belongs to the binding-protein-dependent transport system permease family. AraH/RbsC subfamily. In terms of assembly, the complex is composed of one ATP-binding protein (MglA), two transmembrane proteins (MglC) and a solute-binding protein (MglB).

The protein resides in the cell inner membrane. In terms of biological role, part of the ABC transporter complex MglABC involved in galactose/methyl galactoside import. Probably responsible for the translocation of the substrate across the membrane. This chain is Galactose/methyl galactoside import permease protein MglC (mglC), found in Salmonella typhimurium (strain LT2 / SGSC1412 / ATCC 700720).